Reading from the N-terminus, the 216-residue chain is ATP-dependent Clp protease proteolytic subunit (216 aa).

The active-site Nucleophile is Ser103. The active site involves His128. The segment at 197 to 216 (RRPALPGDDAPRDVSEGPTP) is disordered.

Belongs to the peptidase S14 family. Fourteen ClpP subunits assemble into 2 heptameric rings which stack back to back to give a disk-like structure with a central cavity, resembling the structure of eukaryotic proteasomes.

The protein localises to the cytoplasm. The enzyme catalyses Hydrolysis of proteins to small peptides in the presence of ATP and magnesium. alpha-casein is the usual test substrate. In the absence of ATP, only oligopeptides shorter than five residues are hydrolyzed (such as succinyl-Leu-Tyr-|-NHMec, and Leu-Tyr-Leu-|-Tyr-Trp, in which cleavage of the -Tyr-|-Leu- and -Tyr-|-Trp bonds also occurs).. Functionally, cleaves peptides in various proteins in a process that requires ATP hydrolysis. Has a chymotrypsin-like activity. Plays a major role in the degradation of misfolded proteins. The sequence is that of ATP-dependent Clp protease proteolytic subunit from Sphingopyxis alaskensis (strain DSM 13593 / LMG 18877 / RB2256) (Sphingomonas alaskensis).